The chain runs to 139 residues: ATP synthase epsilon chain (139 aa).

This sequence belongs to the ATPase epsilon chain family. F-type ATPases have 2 components, CF(1) - the catalytic core - and CF(0) - the membrane proton channel. CF(1) has five subunits: alpha(3), beta(3), gamma(1), delta(1), epsilon(1). CF(0) has three main subunits: a, b and c.

The protein resides in the cell membrane. In terms of biological role, produces ATP from ADP in the presence of a proton gradient across the membrane. This chain is ATP synthase epsilon chain, found in Symbiobacterium thermophilum (strain DSM 24528 / JCM 14929 / IAM 14863 / T).